A 330-amino-acid polypeptide reads, in one-letter code: Uracil-DNA glycosylase, mitochondrial (330 aa).

The transit peptide at 1–49 (MASSTPKTLMDFFQPAKRLKASPSSSSFPAVSVAGGSRDLGSVANSPPR) directs the protein to the mitochondrion. The active-site Proton acceptor is Asp173.

It belongs to the uracil-DNA glycosylase (UDG) superfamily. UNG family.

The protein resides in the mitochondrion. It catalyses the reaction Hydrolyzes single-stranded DNA or mismatched double-stranded DNA and polynucleotides, releasing free uracil.. With respect to regulation, inhidited by the small peptide uracil-DNA-glycosylase inhibitor (Ugi). Excises uracil residues from the DNA which can arise as a result of misincorporation of dUMP residues by DNA polymerase or due to deamination of cytosine. More active on U:G, U:T and U:C mispairs than on U:A pairs. Highly specific for uracil and no activity with 5-substituted uracil or cytosine derivatives. Required for initiation of base excision repair (BER) of uracil. This is Uracil-DNA glycosylase, mitochondrial from Arabidopsis thaliana (Mouse-ear cress).